The sequence spans 129 residues: Glycine cleavage system H protein (129 aa).

In terms of domain architecture, Lipoyl-binding spans 24 to 106; it reads TYTVGITEHA…YTGGWIFKIK (83 aa). The residue at position 65 (K65) is an N6-lipoyllysine.

This sequence belongs to the GcvH family. The glycine cleavage system is composed of four proteins: P, T, L and H. Requires (R)-lipoate as cofactor.

The glycine cleavage system catalyzes the degradation of glycine. The H protein shuttles the methylamine group of glycine from the P protein to the T protein. This chain is Glycine cleavage system H protein, found in Salmonella choleraesuis (strain SC-B67).